The primary structure comprises 687 residues: Polyphosphate kinase (687 aa).

Residue asparagine 45 coordinates ATP. Positions 375 and 405 each coordinate Mg(2+). Histidine 435 (phosphohistidine intermediate) is an active-site residue. Residues tyrosine 472, arginine 568, and histidine 596 each coordinate ATP.

Belongs to the polyphosphate kinase 1 (PPK1) family. The cofactor is Mg(2+). An intermediate of this reaction is the autophosphorylated ppk in which a phosphate is covalently linked to a histidine residue through a N-P bond.

It carries out the reaction [phosphate](n) + ATP = [phosphate](n+1) + ADP. Functionally, catalyzes the reversible transfer of the terminal phosphate of ATP to form a long-chain polyphosphate (polyP). This is Polyphosphate kinase from Burkholderia multivorans (strain ATCC 17616 / 249).